A 468-amino-acid chain; its full sequence is UDP-N-acetylmuramate--L-alanine ligase (468 aa).

112–118 (GTHGKTT) contributes to the ATP binding site.

Belongs to the MurCDEF family.

The protein resides in the cytoplasm. It carries out the reaction UDP-N-acetyl-alpha-D-muramate + L-alanine + ATP = UDP-N-acetyl-alpha-D-muramoyl-L-alanine + ADP + phosphate + H(+). Its pathway is cell wall biogenesis; peptidoglycan biosynthesis. Functionally, cell wall formation. In Neisseria meningitidis serogroup C (strain 053442), this protein is UDP-N-acetylmuramate--L-alanine ligase.